The following is a 415-amino-acid chain: U-box domain-containing protein 29 (415 aa).

A U-box domain is found at 11–85 (TVPSFFKCPI…NIWSDSIGRR (75 aa)). ARM repeat units lie at residues 221–263 (KSKL…TISK) and 265–307 (KRVR…TLSS).

As to quaternary structure, binds to SD129 and SD25.

The enzyme catalyses S-ubiquitinyl-[E2 ubiquitin-conjugating enzyme]-L-cysteine + [acceptor protein]-L-lysine = [E2 ubiquitin-conjugating enzyme]-L-cysteine + N(6)-ubiquitinyl-[acceptor protein]-L-lysine.. It participates in protein modification; protein ubiquitination. In terms of biological role, functions as an E3 ubiquitin ligase. This chain is U-box domain-containing protein 29 (PUB29), found in Arabidopsis thaliana (Mouse-ear cress).